The chain runs to 456 residues: Argininosuccinate lyase (456 aa).

The protein belongs to the lyase 1 family. Argininosuccinate lyase subfamily.

It localises to the cytoplasm. It carries out the reaction 2-(N(omega)-L-arginino)succinate = fumarate + L-arginine. It functions in the pathway amino-acid biosynthesis; L-arginine biosynthesis; L-arginine from L-ornithine and carbamoyl phosphate: step 3/3. This is Argininosuccinate lyase from Carboxydothermus hydrogenoformans (strain ATCC BAA-161 / DSM 6008 / Z-2901).